The chain runs to 125 residues: Large ribosomal subunit protein bL12 (125 aa).

Belongs to the bacterial ribosomal protein bL12 family. As to quaternary structure, homodimer. Part of the ribosomal stalk of the 50S ribosomal subunit. Forms a multimeric L10(L12)X complex, where L10 forms an elongated spine to which 2 to 4 L12 dimers bind in a sequential fashion. Binds GTP-bound translation factors.

In terms of biological role, forms part of the ribosomal stalk which helps the ribosome interact with GTP-bound translation factors. Is thus essential for accurate translation. This Parabacteroides distasonis (strain ATCC 8503 / DSM 20701 / CIP 104284 / JCM 5825 / NCTC 11152) protein is Large ribosomal subunit protein bL12.